Here is a 433-residue protein sequence, read N- to C-terminus: FAD-dependent monooxygenase notI (433 aa).

2 residues coordinate FAD: Glu-45 and Arg-117. The active site involves Arg-195. The FAD site is built by Asp-314 and Ala-327.

It belongs to the paxM FAD-dependent monooxygenase family. FAD is required as a cofactor.

The protein operates within alkaloid biosynthesis. Its function is as follows. FAD-dependent monooxygenase; part of the gene cluster that mediates the biosynthesis of notoamide, a fungal indole alkaloid that belongs to a family of natural products containing a characteristic bicyclo[2.2.2]diazaoctane core. The first step of notoamide biosynthesis involves coupling of L-proline and L-tryptophan by the bimodular NRPS notE, to produce cyclo-L-tryptophan-L-proline called brevianamide F. The reverse prenyltransferase notF then acts as a deoxybrevianamide E synthase and converts brevianamide F to deoxybrevianamide E via reverse prenylation at C-2 of the indole ring leading to the bicyclo[2.2.2]diazaoctane core. Deoxybrevianamide E is further hydroxylated at C-6 of the indole ring, likely catalyzed by the cytochrome P450 monooxygenase notG, to yield 6-hydroxy-deoxybrevianamide E. 6-hydroxy-deoxybrevianamide E is a specific substrate of the prenyltransferase notC for normal prenylation at C-7 to produce 6-hydroxy-7-prenyl-deoxybrevianamide, also called notoamide S. As the proposed pivotal branching point in notoamide biosynthesis, notoamide S can be diverted to notoamide E through an oxidative pyran ring closure putatively catalyzed by either notH cytochrome P450 monooxygenase or the notD FAD-linked oxidoreductase. This step would be followed by an indole 2,3-epoxidation-initiated pinacol-like rearrangement catalyzed by the notB FAD-dependent monooxygenase leading to the formation of notoamide C and notoamide D. On the other hand notoamide S is converted to notoamide T by notH (or notD), a bifunctional oxidase that also functions as the intramolecular Diels-Alderase responsible for generation of (+)-notoamide T. To generate antipodal (-)-notoaminide T, notH' (or notD') in Aspergillus versicolor is expected to catalyze a Diels-Alder reaction leading to the opposite stereochemistry. The remaining oxidoreductase notD (or notH) likely catalyzes the oxidative pyran ring formation to yield (+)-stephacidin A. The FAD-dependent monooxygenase notI is highly similar to notB and is predicted to catalyze a similar conversion from (+)-stephacidin A to (-)-notoamide B via the 2,3-epoxidation of (+)-stephacidin A followed by a pinacol-type rearrangement. Finally, it remains unclear which enzyme could be responsible for the final hydroxylation steps leading to notoamide A and sclerotiamide. The chain is FAD-dependent monooxygenase notI from Aspergillus sp. (strain MF297-2).